The following is a 553-amino-acid chain: Methyl-coenzyme M reductase subunit alpha (553 aa).

Gln151 is a coenzyme F430 binding site. Residues Arg229, 260 to 261 (KH), and Arg274 contribute to the coenzyme B site. Coenzyme M is bound by residues Tyr336 and Tyr447.

The protein belongs to the methyl-coenzyme M reductase alpha subunit family. As to quaternary structure, MCR is a hexamer of two alpha, two beta, and two gamma chains, forming a dimer of heterotrimers. The cofactor is coenzyme F430.

Its subcellular location is the cytoplasm. The catalysed reaction is coenzyme B + methyl-coenzyme M = methane + coenzyme M-coenzyme B heterodisulfide. It functions in the pathway one-carbon metabolism; methyl-coenzyme M reduction; methane from methyl-coenzyme M: step 1/1. Its function is as follows. Component of the methyl-coenzyme M reductase (MCR) I that catalyzes the reductive cleavage of methyl-coenzyme M (CoM-S-CH3 or 2-(methylthio)ethanesulfonate) using coenzyme B (CoB or 7-mercaptoheptanoylthreonine phosphate) as reductant which results in the production of methane and the mixed heterodisulfide of CoB and CoM (CoM-S-S-CoB). This is the final step in methanogenesis. The polypeptide is Methyl-coenzyme M reductase subunit alpha (mcrA) (Methanococcus vannielii).